Here is a 706-residue protein sequence, read N- to C-terminus: MEKPRGVEETPSSEPMEEEEEDDDLELFGGYDSFRSYNSSAGSESSSYLEESSEAEHEDREAGELPTSPLHLLSPGTPRSLDGSGSEPAVCEMCGIVGTREAFFSKTKRFCSVSCSRSYSSNSKKASILARLQGKPPTKKAKVLHKAAWSAKIGAFLHSQGTGQLADGTPTGQDALVLGFDWGKFLKDHSYKAAPVSCFKHVPLYDQWEDVMKGMKVEVLNSDAVLPSRVYWIASVIQAAGYRVLLRYEGFENDASHDFWCNLGTVDVHPIGWCAINSKILVPPRTIHAKFTDWKGYLMKRLVGSRTLPVDFHIKMVESMKYPFRQGMRLEVVDKSQVSRTRMAVVDTVIGGRLRLLYEDGDSDDDFWCHMWSPLIHPVGWSRRVGHGIKLSERRSDMAHHPTFRKIYCDAVPYLFKKVRAVYTEGGWFEEGMKLEAIDPLNLGNICVATICKVLLDGYLMICVDGGPSTDGSDWFCYHASSHAIFPANFCQKNDIELTPPKGYEAHTFSWEAYLEKTKAKAAPSRLFNMDCPNHGFKVGMKLEAVDLMEPRLICVATVKRVVHRLLSIHFDGWDSEYDQWVDCESPDIYPVGWCELTGYQLQPPVATEPTTPLKAKEATKKKKKQFGKKRKRIPPAKTRPLRQGSKKALLEEDLQAAAKAPSEPAPDEIITVRVKEEHLDVATADKALSPELPVPVENIKQETDD.

Positions 1–85 (MEKPRGVEET…GTPRSLDGSG (85 aa)) are disordered. Ser13 carries the post-translational modification Phosphoserine. Positions 15–26 (PMEEEEEDDDLE) are enriched in acidic residues. The segment covering 39 to 50 (SSAGSESSSYLE) has biased composition (low complexity). Basic and acidic residues predominate over residues 54-63 (EAEHEDREAG). Ser68 carries the phosphoserine modification. At Thr77 the chain carries Phosphothreonine. The segment at 82–117 (DGSGSEPAVCEMCGIVGTREAFFSKTKRFCSVSCSR) adopts an FCS-type zinc-finger fold. Positions 91, 94, 111, and 115 each coordinate Zn(2+). 4 MBT repeats span residues 180 to 284 (FDWG…LVPP), 292 to 392 (TDWK…IKLS), 398 to 501 (MAHH…LTPP), and 509 to 605 (FSWE…LQPP). At Ser339 the chain carries Phosphoserine. A Glycyl lysine isopeptide (Lys-Gly) (interchain with G-Cter in SUMO2) cross-link involves residue Lys406. Residues 606-669 (VATEPTTPLK…KAPSEPAPDE (64 aa)) form a disordered region. Basic residues predominate over residues 620 to 635 (TKKKKKQFGKKRKRIP). Residues Lys648, Lys660, and Lys676 each participate in a glycyl lysine isopeptide (Lys-Gly) (interchain with G-Cter in SUMO2) cross-link. The interval 685–706 (ADKALSPELPVPVENIKQETDD) is disordered. Ser690 carries the phosphoserine modification. A Glycyl lysine isopeptide (Lys-Gly) (interchain with G-Cter in SUMO1); alternate cross-link involves residue Lys701. Lys701 participates in a covalent cross-link: Glycyl lysine isopeptide (Lys-Gly) (interchain with G-Cter in SUMO2); alternate.

As to quaternary structure, part of the E2F6.com-1 complex in G0 phase composed of E2F6, MGA, MAX, TFDP1, CBX3, BAT8, EUHMTASE1, RING1, RNF2, MBLR, BAT8 and YAF2.

The protein resides in the nucleus. Putative Polycomb group (PcG) protein. PcG proteins maintain the transcriptionally repressive state of genes, probably via a modification of chromatin, rendering it heritably changed in its expressibility. Its association with a chromatin-remodeling complex suggests that it may contribute to prevent expression of genes that trigger the cell into mitosis. Binds to monomethylated and dimethylated 'Lys-20' on histone H4. Binds histone H3 peptides that are monomethylated or dimethylated on 'Lys-4', 'Lys-9' or 'Lys-27'. The polypeptide is Lethal(3)malignant brain tumor-like protein 2 (L3MBTL2) (Bos taurus (Bovine)).